A 1091-amino-acid polypeptide reads, in one-letter code: ATP-citrate synthase (1091 aa).

In terms of domain architecture, ATP-grasp spans 4-265 (KAISEQTGKE…LDAKSGASLK (262 aa)). ATP contacts are provided by Lys58, Arg66, Gly67, Pro109, Val111, and Glu118. Tyr131 is modified (phosphotyrosine). Asp216 is a binding site for ATP. Mg(2+)-binding residues include Asp257, Ser260, and Ala262. Ser263 bears the Phosphoserine mark. Residues Gly309, Asn346, Thr348, Tyr364, and Arg379 each coordinate citrate. Low complexity predominate over residues 442-457 (SGSTSTPAPSRTASFS). Residues 442–478 (SGSTSTPAPSRTASFSESRADEVAPAKKAKPAMPQGK) form a disordered region. The residue at position 447 (Thr447) is a Phosphothreonine. Residue Ser451 is modified to Phosphoserine. Phosphoserine; by PKA and PKB/AKT1 or PKB/AKT2 or BCKDK is present on Ser455. Ser459 carries the post-translational modification Phosphoserine. N6-acetyllysine; alternate is present on residues Lys530, Lys536, and Lys544. Residues Lys530, Lys536, and Lys544 each participate in a glycyl lysine isopeptide (Lys-Gly) (interchain with G-Cter in ubiquitin); alternate cross-link. Residue Thr629 is modified to Phosphothreonine. Phosphoserine is present on Ser653. At Tyr672 the chain carries Phosphotyrosine. The Tele-phosphohistidine intermediate role is filled by His750. 769 to 779 (LKEAGVFVPRS) is a binding site for CoA. Ser829 carries the phosphoserine modification. An N6-acetyllysine mark is found at Lys938, Lys958, Lys968, and Lys1067. Residue Ser1090 is modified to Phosphoserine.

In the N-terminal section; belongs to the succinate/malate CoA ligase beta subunit family. The protein in the C-terminal section; belongs to the succinate/malate CoA ligase alpha subunit family. Homotetramer. Mg(2+) is required as a cofactor. Phosphorylated by PKA and GSK3 in a sequential manner; phosphorylation results in activation of its activity. Phosphorylation on Thr-447 and Ser-451 depends on the phosphorylation state of Ser-455. Phosphorylation on Ser-455 is decreased by prior phosphorylation on the other 2 residues. Phosphorylated at Ser-455 by BCKDK and dephosphorylated by protein phosphatase PPM1K. In terms of processing, ISGylated. Post-translationally, acetylated at Lys-530, Lys-536 and Lys-544 by KAT2B/PCAF. Acetylation is promoted by glucose and stabilizes the protein, probably by preventing ubiquitination at the same sites. Acetylation promotes de novo lipid synthesis. Deacetylated by SIRT2. Ubiquitinated at Lys-530, Lys-536 and Lys-544 by the BCR(KLHL25) E3 ubiquitin ligase complex and UBR4, leading to its degradation. Ubiquitination is probably inhibited by acetylation at same site. BCR(KLHL25)-mediated degradation of ACLY promotes fatty acid oxidation and is required for differentiation of inducible regulatory T (iTreg) cells.

Its subcellular location is the cytoplasm. The protein resides in the cytosol. The catalysed reaction is oxaloacetate + acetyl-CoA + ADP + phosphate = citrate + ATP + CoA. Its activity is regulated as follows. Phosphorylation results in activation of its activity. Glucose 6-phosphate, fructose 6-phosphate, fructose 2,6-bisphosphate, ribulose 5-phosphate, and fructose 1,6-bisphosphate also act as activators. Catalyzes the cleavage of citrate into oxaloacetate and acetyl-CoA, the latter serving as common substrate in multiple biochemical reactions in protein, carbohydrate and lipid metabolism. This Mus musculus (Mouse) protein is ATP-citrate synthase (Acly).